The chain runs to 178 residues: MDNSIPIESPSLSRRQLLNFITGATVAVTAGAALYPAGKFLIAPAEKTGAGGAILAKDILGKQIPASQILAEPPQTRALVAGLAGEPTYLIVKEDHTLDRIGLVDNCTHLGCTFPWNPLDQQFQCPCHGSRYAPDGSVVRGPAPLPLKIVQVAVIDNSILISPWTETDPRTGKKPWWV.

The helical transmembrane segment at 20–42 threads the bilayer; that stretch reads FITGATVAVTAGAALYPAGKFLI. One can recognise a Rieske domain in the interval 65–161; the sequence is PASQILAEPP…VAVIDNSILI (97 aa). Residues cysteine 107, histidine 109, cysteine 125, and histidine 128 each coordinate [2Fe-2S] cluster. Cysteine 112 and cysteine 127 form a disulfide bridge.

The protein belongs to the Rieske iron-sulfur protein family. As to quaternary structure, the 4 large subunits of the cytochrome b6-f complex are cytochrome b6, subunit IV (17 kDa polypeptide, PetD), cytochrome f and the Rieske protein, while the 4 small subunits are PetG, PetL, PetM and PetN. The complex functions as a dimer. [2Fe-2S] cluster serves as cofactor.

The protein localises to the cellular thylakoid membrane. It carries out the reaction 2 oxidized [plastocyanin] + a plastoquinol + 2 H(+)(in) = 2 reduced [plastocyanin] + a plastoquinone + 4 H(+)(out). Its function is as follows. Component of the cytochrome b6-f complex, which mediates electron transfer between photosystem II (PSII) and photosystem I (PSI), cyclic electron flow around PSI, and state transitions. This chain is Cytochrome b6-f complex iron-sulfur subunit 3, found in Nostoc sp. (strain PCC 7120 / SAG 25.82 / UTEX 2576).